The chain runs to 698 residues: Probable xyloglucan glycosyltransferase 2 (698 aa).

2 consecutive transmembrane segments (helical) span residues 124–144 (GFLA…WNGW) and 190–210 (ILLF…CFWI). Residue aspartate 272 is part of the active site. Substrate contacts are provided by aspartate 331 and aspartate 333. The active site involves aspartate 425. The next 4 helical transmembrane spans lie at 503–523 (LILP…TMFV), 528–548 (LPVW…ILPS), 653–668 (LALS…RSLL), and 673–693 (IHFY…LDLI).

This sequence belongs to the glycosyltransferase 2 family. Plant cellulose synthase-like C subfamily.

It localises to the golgi apparatus membrane. Functionally, probable beta-1,4-glucan synthase rather involved in the synthesis of the xyloglucan backbone than cellulose. Seems to work simultaneously with xyloglucan 6-xylosyltransferase. Xyloglucan is a noncellulosic polysaccharides of plant cell wall and consists of a glucan backbone substituted by xylose, galactose and fucose. The polypeptide is Probable xyloglucan glycosyltransferase 2 (CSLC2) (Oryza sativa subsp. indica (Rice)).